The primary structure comprises 453 residues: Bifunctional protein GlmU (453 aa).

The interval 1–231 (MERTCLAVIL…EIEMTGCNTR (231 aa)) is pyrophosphorylase. Residues 10–13 (LAAG), Lys24, Gln77, 82–83 (GT), 105–107 (YGD), Gly143, Glu157, Asn172, and Asn229 contribute to the UDP-N-acetyl-alpha-D-glucosamine site. Asp107 provides a ligand contact to Mg(2+). Asn229 provides a ligand contact to Mg(2+). The segment at 232-252 (AELAVIERFWQERRRHQMMLS) is linker. Residues 253–453 (GVTMIAPETV…AIKAAKKAKA (201 aa)) are N-acetyltransferase. Arg318 and Lys336 together coordinate UDP-N-acetyl-alpha-D-glucosamine. His348 functions as the Proton acceptor in the catalytic mechanism. 2 residues coordinate UDP-N-acetyl-alpha-D-glucosamine: Tyr351 and Asn362. Acetyl-CoA is bound by residues Ala365, 371-372 (NY), Ser390, Ser408, and Arg425.

In the N-terminal section; belongs to the N-acetylglucosamine-1-phosphate uridyltransferase family. It in the C-terminal section; belongs to the transferase hexapeptide repeat family. In terms of assembly, homotrimer. Requires Mg(2+) as cofactor.

Its subcellular location is the cytoplasm. The enzyme catalyses alpha-D-glucosamine 1-phosphate + acetyl-CoA = N-acetyl-alpha-D-glucosamine 1-phosphate + CoA + H(+). It catalyses the reaction N-acetyl-alpha-D-glucosamine 1-phosphate + UTP + H(+) = UDP-N-acetyl-alpha-D-glucosamine + diphosphate. It participates in nucleotide-sugar biosynthesis; UDP-N-acetyl-alpha-D-glucosamine biosynthesis; N-acetyl-alpha-D-glucosamine 1-phosphate from alpha-D-glucosamine 6-phosphate (route II): step 2/2. It functions in the pathway nucleotide-sugar biosynthesis; UDP-N-acetyl-alpha-D-glucosamine biosynthesis; UDP-N-acetyl-alpha-D-glucosamine from N-acetyl-alpha-D-glucosamine 1-phosphate: step 1/1. Its pathway is bacterial outer membrane biogenesis; LPS lipid A biosynthesis. Its function is as follows. Catalyzes the last two sequential reactions in the de novo biosynthetic pathway for UDP-N-acetylglucosamine (UDP-GlcNAc). The C-terminal domain catalyzes the transfer of acetyl group from acetyl coenzyme A to glucosamine-1-phosphate (GlcN-1-P) to produce N-acetylglucosamine-1-phosphate (GlcNAc-1-P), which is converted into UDP-GlcNAc by the transfer of uridine 5-monophosphate (from uridine 5-triphosphate), a reaction catalyzed by the N-terminal domain. The chain is Bifunctional protein GlmU from Rhizobium johnstonii (strain DSM 114642 / LMG 32736 / 3841) (Rhizobium leguminosarum bv. viciae).